Consider the following 431-residue polypeptide: Glutamyl-tRNA(Gln) amidotransferase subunit A (431 aa).

Catalysis depends on charge relay system residues lysine 55 and serine 130. Catalysis depends on serine 154, which acts as the Acyl-ester intermediate.

It belongs to the amidase family. GatA subfamily. Heterotrimer of A, B and C subunits.

It catalyses the reaction L-glutamyl-tRNA(Gln) + L-glutamine + ATP + H2O = L-glutaminyl-tRNA(Gln) + L-glutamate + ADP + phosphate + H(+). Its function is as follows. Allows the formation of correctly charged Gln-tRNA(Gln) through the transamidation of misacylated Glu-tRNA(Gln) in organisms which lack glutaminyl-tRNA synthetase. The reaction takes place in the presence of glutamine and ATP through an activated gamma-phospho-Glu-tRNA(Gln). The chain is Glutamyl-tRNA(Gln) amidotransferase subunit A from Methanococcus maripaludis (strain C7 / ATCC BAA-1331).